The primary structure comprises 217 residues: Peptide deformylase 1 (217 aa).

Fe cation-binding residues include C129 and H171. E172 is a catalytic residue. Fe cation is bound at residue H175.

The protein belongs to the polypeptide deformylase family. It depends on Fe(2+) as a cofactor.

It catalyses the reaction N-terminal N-formyl-L-methionyl-[peptide] + H2O = N-terminal L-methionyl-[peptide] + formate. Functionally, removes the formyl group from the N-terminal Met of newly synthesized proteins. Requires at least a dipeptide for an efficient rate of reaction. N-terminal L-methionine is a prerequisite for activity but the enzyme has broad specificity at other positions. This Bifidobacterium longum (strain NCC 2705) protein is Peptide deformylase 1.